A 223-amino-acid polypeptide reads, in one-letter code: MPPQQQRGRGRGRGPGGPGGPGGPGPEQAPEDPDRESGGERRRGRGRGAGRGGGDKAERAQAETEFQERVVQIRRVTKVVKGGKKLSFRAVIVVGDGNGRVGVGVGKANDVIGAVKKGVSDARKALIRVPLNKINSIPHPMSGSSGAANVFLKPASGGTGVIAGGAVRTVLELAGIKNVLAKSLGSKSPLNNARAAADALSRLRTLSEVAGERGVPVSNLWSR.

A disordered region spans residues 1–66 (MPPQQQRGRG…AERAQAETEF (66 aa)). Residues 13–22 (RGPGGPGGPG) are compositionally biased toward gly residues. Positions 53–66 (GGDKAERAQAETEF) are enriched in basic and acidic residues. The S5 DRBM domain occupies 66–129 (FQERVVQIRR…SDARKALIRV (64 aa)).

It belongs to the universal ribosomal protein uS5 family. Part of the 30S ribosomal subunit. Contacts proteins S4 and S8.

Functionally, with S4 and S12 plays an important role in translational accuracy. Its function is as follows. Located at the back of the 30S subunit body where it stabilizes the conformation of the head with respect to the body. The polypeptide is Small ribosomal subunit protein uS5 (Gloeobacter violaceus (strain ATCC 29082 / PCC 7421)).